A 467-amino-acid polypeptide reads, in one-letter code: MLITFNFEVHQPHRLNKEINQNGNTLWEKYVDTKLNKEVFNKVANKCYIPTNELILELIDEYDFKVNYSITGVFVEQALEFNDYVLDLFKDLVKTGNVELIAETYHHSLTSLFETEDEFIEDIEMHRKMYKEIFGFKAKVFRNTELIYNNRIAKIAKDLGFKAIFTEGIEKILGWRSPNYLYQSPDGMKILLRNYRLSDDIGFRFSARDWDQYPLTADKYAIWLASTPGEVINIYMDYETFGEHHWKETGIFEFLRYLPIEIAKHEHLEVVNVSEVVDRLEPRGEIYVHEFATISWADTERDVSAWLGNKMQRISFEKLKDIGKFIKENSNKLKKLNKFDEIYKMYKVLQTSDNLYYQSIKGLSDMSVHNYFSHFDTPFDAYASYLNILYDFEYYIKELLAKSEFDKNNRRKDGQKQYEKDDEVKKESLINTNIIVAKDDKTESIYIEDEEGKKNKRYERDEGFIIA.

Catalysis depends on Glu-145, which acts as the Nucleophile.

It belongs to the glycosyl hydrolase 57 family.

It catalyses the reaction Endohydrolysis of (1-&gt;4)-alpha-D-glucosidic linkages in polysaccharides containing three or more (1-&gt;4)-alpha-linked D-glucose units.. The polypeptide is Putative alpha-amylase (Methanocaldococcus jannaschii (strain ATCC 43067 / DSM 2661 / JAL-1 / JCM 10045 / NBRC 100440) (Methanococcus jannaschii)).